The following is a 96-amino-acid chain: Seed trypsin/chymotrypsin inhibitor IVA (96 aa).

Positions L1–A10 are cleaved as a signal peptide. Positions R11–N24 are excised as a propeptide. 7 cysteine pairs are disulfide-bonded: C32–C85, C33–C48, C36–C81, C38–C46, C55–C62, C59–C74, and C64–C72. Positions S88–N96 are cleaved as a propeptide — removed in PSTI I.

The protein belongs to the Bowman-Birk serine protease inhibitor family. In terms of tissue distribution, seed.

In terms of biological role, inhibitor of trypsin and of chymotrypsin. May function as a natural phytochemical defense against predators. This is Seed trypsin/chymotrypsin inhibitor IVA (TI1236) from Pisum sativum (Garden pea).